Consider the following 308-residue polypeptide: Glutaminase (308 aa).

Substrate is bound by residues Ser-66, Asn-117, Glu-161, Asn-168, Tyr-192, Tyr-244, and Val-262.

The protein belongs to the glutaminase family. Homotetramer.

The enzyme catalyses L-glutamine + H2O = L-glutamate + NH4(+). The protein is Glutaminase of Salmonella dublin (strain CT_02021853).